The following is a 207-amino-acid chain: Abscisic acid receptor PYL4 (207 aa).

An START-like region spans residues 45 to 195 (HEVGPNQCCS…NLQSLAKIAE (151 aa)). Cysteine 52 and cysteine 176 form a disulfide bridge. Abscisate is bound by residues lysine 81, 111–116 (AASSTE), 138–144 (RLSNYRS), and glutamate 160. The Gate loop motif lies at 107–111 (SGLPA). The Latch loop signature appears at 137–139 (HRL).

This sequence belongs to the PYR/PYL/RCAR abscisic acid intracellular receptor family. In terms of assembly, monomer. Homodimer. Binds ABA on one subunit only. Interacts with HAB1, ABI1 and ABI2, and possibly with other PP2Cs. Binds to CARs protein in an ABA-independent manner, both at the plasma membrane and in the nucleus. Interacts directly with CAR1 and CAR4. Interacts with TOPP1. Interacts with DDA1. Interacts with FREE1 (via N-terminus). Interacts with the E3 ubiquitin-protein ligase RSL1 at the plasma membrane. Post-translationally, ubiquitynated and degraded by the proteasome upon binding to the E3 ubiquitin-protein ligase RSL1 at the plasma membrane.

The protein resides in the cytoplasm. It is found in the nucleus. The protein localises to the cell membrane. Its subcellular location is the vacuole. Its function is as follows. Receptor for abscisic acid (ABA) required for ABA-mediated responses such as stomatal closure and germination inhibition. Inhibits the activity of group-A protein phosphatases type 2C (PP2Cs) when activated by ABA. Can be activated by both (-)-ABA and (+)-ABA. In Arabidopsis thaliana (Mouse-ear cress), this protein is Abscisic acid receptor PYL4.